We begin with the raw amino-acid sequence, 392 residues long: ESX-1 secretion-associated protein EspA (392 aa).

Residues Thr302–Val392 form a disordered region. Positions Gln334–Gly344 are enriched in gly residues.

As to quaternary structure, homodimer; disulfide-linked. An artificial EsxB-EsxA heterodimer interacts with EspA.

The protein resides in the secreted. Its function is as follows. Required for secretion of EsxA (ESAT-6) and EsxB (CFP-10) and for virulence. Involved in translocation of bacteria from the host (human) phagolysosome to the host cytoplasm. In Mycobacterium tuberculosis (strain ATCC 25618 / H37Rv), this protein is ESX-1 secretion-associated protein EspA.